The following is a 66-amino-acid chain: Delta-buthitoxin-Hj1a (66 aa).

The LCN-type CS-alpha/beta domain occupies Arg4–His66. 4 disulfide bridges follow: Cys14-Cys65, Cys18-Cys38, Cys24-Cys48, and Cys28-Cys50.

The protein belongs to the long (4 C-C) scorpion toxin superfamily. Sodium channel inhibitor family. Alpha subfamily. Expressed by the venom gland.

The protein resides in the secreted. Functionally, this recombinant toxin slows fast inactivation on Nav1.1/SCN1A (EC(50)=17 nM), Nav1.4/SN4A (EC(50)=7.5 nM), Nav1.5/SCN5A (EC(50)=9.2 nM) and Nav1.6/SCN8A (EC(50)=37.3 nM) voltage-gated sodium channels. On Nav1.1/SCN1A channel, it acts as an agonist by inducing a shift in both the voltage dependence of channel inactivation (alpha-toxin activity) and activation (beta-toxin activity). In vivo, shows moderate insecticidal activities. It induces irreversible paralysis in blowflies and lethal effects in D.melanogaster. The protein is Delta-buthitoxin-Hj1a of Hottentotta judaicus (Black scorpion).